A 190-amino-acid chain; its full sequence is ATP synthase subunit delta (190 aa).

This sequence belongs to the ATPase delta chain family. In terms of assembly, F-type ATPases have 2 components, F(1) - the catalytic core - and F(0) - the membrane proton channel. F(1) has five subunits: alpha(3), beta(3), gamma(1), delta(1), epsilon(1). F(0) has three main subunits: a(1), b(2) and c(10-14). The alpha and beta chains form an alternating ring which encloses part of the gamma chain. F(1) is attached to F(0) by a central stalk formed by the gamma and epsilon chains, while a peripheral stalk is formed by the delta and b chains.

Its subcellular location is the cell inner membrane. In terms of biological role, f(1)F(0) ATP synthase produces ATP from ADP in the presence of a proton or sodium gradient. F-type ATPases consist of two structural domains, F(1) containing the extramembraneous catalytic core and F(0) containing the membrane proton channel, linked together by a central stalk and a peripheral stalk. During catalysis, ATP synthesis in the catalytic domain of F(1) is coupled via a rotary mechanism of the central stalk subunits to proton translocation. This protein is part of the stalk that links CF(0) to CF(1). It either transmits conformational changes from CF(0) to CF(1) or is implicated in proton conduction. In Salinibacter ruber (strain DSM 13855 / M31), this protein is ATP synthase subunit delta.